A 127-amino-acid polypeptide reads, in one-letter code: Protein yippee-like 4 (127 aa).

The region spanning 27 to 124 (RTYSCVHCRA…IEMSHMVKDN (98 aa)) is the Yippee domain. 4 residues coordinate Zn(2+): cysteine 31, cysteine 34, cysteine 87, and cysteine 90. Phosphothreonine is present on residues threonine 92 and threonine 93. Phosphotyrosine is present on tyrosine 98.

This sequence belongs to the yippee family. As to expression, detected in brain, spleen and testis.

It localises to the nucleus. It is found in the nucleolus. In Mus musculus (Mouse), this protein is Protein yippee-like 4 (Ypel4).